The following is a 186-amino-acid chain: Lactoylglutathione lyase (186 aa).

A VOC domain is found at 28–175; that stretch reads FMQQTMFRIK…DGYWIELFDR (148 aa). 2 residues coordinate substrate: Gln31 and Arg35. Gln31 contributes to the Zn(2+) binding site. A Zn(2+)-binding site is contributed by Glu97. Residues Asn101, Arg121, His125, and 155 to 156 contribute to the substrate site; that span reads KM. His125 serves as a coordination point for Zn(2+). Glu171 is a binding site for Zn(2+). The active-site Proton donor/acceptor is the Glu171.

Belongs to the glyoxalase I family. It depends on Zn(2+) as a cofactor.

The catalysed reaction is (R)-S-lactoylglutathione = methylglyoxal + glutathione. It functions in the pathway secondary metabolite metabolism; methylglyoxal degradation; (R)-lactate from methylglyoxal: step 1/2. Functionally, catalyzes the conversion of hemimercaptal, formed from methylglyoxal and glutathione, to S-lactoylglutathione. The polypeptide is Lactoylglutathione lyase (Cicer arietinum (Chickpea)).